We begin with the raw amino-acid sequence, 263 residues long: 3-methyl-2-oxobutanoate hydroxymethyltransferase (263 aa).

Residues D45 and D84 each contribute to the Mg(2+) site. 3-methyl-2-oxobutanoate contacts are provided by residues 45-46 (DS), D84, and K112. E114 contributes to the Mg(2+) binding site. E180 functions as the Proton acceptor in the catalytic mechanism.

This sequence belongs to the PanB family. As to quaternary structure, homodecamer; pentamer of dimers. Mg(2+) is required as a cofactor.

It is found in the cytoplasm. The enzyme catalyses 3-methyl-2-oxobutanoate + (6R)-5,10-methylene-5,6,7,8-tetrahydrofolate + H2O = 2-dehydropantoate + (6S)-5,6,7,8-tetrahydrofolate. The protein operates within cofactor biosynthesis; (R)-pantothenate biosynthesis; (R)-pantoate from 3-methyl-2-oxobutanoate: step 1/2. Its function is as follows. Catalyzes the reversible reaction in which hydroxymethyl group from 5,10-methylenetetrahydrofolate is transferred onto alpha-ketoisovalerate to form ketopantoate. The chain is 3-methyl-2-oxobutanoate hydroxymethyltransferase from Salmonella paratyphi C (strain RKS4594).